A 100-amino-acid chain; its full sequence is NADH-quinone oxidoreductase subunit K (100 aa).

A run of 3 helical transmembrane segments spans residues 4–24 (LQHG…GLVI), 28–48 (LLFM…AFVV), and 60–80 (VMYI…LALL).

This sequence belongs to the complex I subunit 4L family. In terms of assembly, NDH-1 is composed of 13 different subunits. Subunits NuoA, H, J, K, L, M, N constitute the membrane sector of the complex.

The protein localises to the cell inner membrane. It catalyses the reaction a quinone + NADH + 5 H(+)(in) = a quinol + NAD(+) + 4 H(+)(out). In terms of biological role, NDH-1 shuttles electrons from NADH, via FMN and iron-sulfur (Fe-S) centers, to quinones in the respiratory chain. The immediate electron acceptor for the enzyme in this species is believed to be ubiquinone. Couples the redox reaction to proton translocation (for every two electrons transferred, four hydrogen ions are translocated across the cytoplasmic membrane), and thus conserves the redox energy in a proton gradient. The chain is NADH-quinone oxidoreductase subunit K from Shigella sonnei (strain Ss046).